A 1311-amino-acid chain; its full sequence is Protein PARALOG OF AIPP2 (1311 aa).

Disordered stretches follow at residues 1 to 21 (MADR…KVES), 114 to 141 (ISDD…VSAS), and 178 to 280 (GNKD…EMVE). Residues 213–240 (NHDDRVSSEKGNFKEKSRPGGNKERQEP) are compositionally biased toward basic and acidic residues. A compositionally biased stretch (low complexity) spans 258 to 270 (SKSSSSNSSAVSE). Residues 283 to 334 (VKVCDICGDAGREDLLAICSGCSDGAEHTYCMREMLDEVPEGDWLCEECAEE) form a PHD-type zinc finger. The Zn(2+) site is built by cysteine 286, cysteine 289, cysteine 301, cysteine 304, histidine 310, cysteine 313, cysteine 328, and cysteine 331. The stretch at 328-348 (CEECAEEAEKQKQEAKRKRET) forms a coiled coil. Disordered regions lie at residues 369–390 (PDAK…ILPR), 411–440 (NHQT…FLKS), 460–701 (HPRQ…EDLN), 975–1050 (TNPQ…PSKK), 1059–1078 (EAGV…GDSL), 1087–1138 (EQEL…NPAN), 1152–1186 (NDGL…GIMK), and 1249–1311 (LSRS…DLPR). A compositionally biased stretch (polar residues) spans 411–431 (NHQTSFSDDTESARSAGSQLQ). Positions 460-472 (HPRQKTGKEDTAL) are enriched in basic and acidic residues. Residues 487 to 502 (PSRTTDAGNSGGSDSQ) show a composition bias toward polar residues. Basic and acidic residues predominate over residues 512–528 (HSQEGKSLKQVKDRNRE). Polar residues predominate over residues 529-552 (ANASASSIDQKLKSRGNSSVSHAN). Basic and acidic residues predominate over residues 553–566 (NNRDLKGLQSDGKR). The span at 569–607 (LTKQVSNLSRNRLENSVVSGGDISTNEKCSASEQSSSQA) shows a compositional bias: polar residues. The span at 640-653 (VPREVGKKSKEAFS) shows a compositional bias: basic and acidic residues. Polar residues-rich tracts occupy residues 668–694 (PSSQ…STTK), 977–988 (PQKNTSLPTSNV), and 1014–1025 (LRESSSNGIETR). Positions 1026-1050 (NGTDARSHENPNNRESSIERSPSKK) are enriched in basic and acidic residues. The segment covering 1087-1096 (EQELGGRKDL) has biased composition (basic and acidic residues). Residues 1250-1263 (SRSSNSGEQSNNSM) are compositionally biased toward polar residues. Residues 1256 to 1276 (GEQSNNSMNKEKQKADEEEED) are a coiled coil. Over residues 1280-1289 (VAASLSLSLS) the composition is skewed to low complexity.

As to quaternary structure, part of the BAH-PHD bivalent histone reader complex that contains AIPP2, PAIPP2 and AIPP3/BDT1; the BAH-PHD module associates with CPL2 to form the BAH-PHD-CPL2 complex (BPC) for transcriptional repression. Binds directly to AIPP3/BDT1 and CPL2, but not to AIPP2. Expressed ubiquitously.

In terms of biological role, together with AIPP2 and AIPP3/BDT1, cooperates to form a BAH-PHD bivalent histone reader complex able to read histone H3 lysine 27 trimethylation (H3K27me3) and low-methylated H3K4 histone marks in order to regulate transcription, especially to prevent early flowering; promotes AIPP3/BDT1 binding to H3K27me3. CPL2 is subsequently recruited to form a BAH-PHD-CPL2 complex (BPC) in order to silence several H3K27me3 and low-methylated H3K4 enriched loci, including AGO5, via the phosphorylation state-dependent inhibition of Pol II release from the transcriptional start site (e.g. Ser5P-Pol II dephosphorylation). The BPC complex represses flowering by inhibiting the expression of several genes, including AGL6, FT, FUL and SOC1. This Arabidopsis thaliana (Mouse-ear cress) protein is Protein PARALOG OF AIPP2.